The chain runs to 485 residues: Probable WRKY transcription factor 10 (485 aa).

2 disordered regions span residues 43–62 and 215–293; these read IFPQESLPRDHTDQSGQRSG and ISIE…SKTQ. The segment covering 216–264 has biased composition (acidic residues); sequence SIEDSESEDGNKDDDDEDFQYEDEDEDQYDQDQDVDEDEEEEKDEDNVA. The segment at residues 301–366 is a DNA-binding region (WRKY); the sequence is SDEDNPNDGY…YDGIHNHPSP (66 aa). Positions 332, 337, 361, and 363 each coordinate Zn(2+). The disordered stretch occupies residues 358–417; it reads DGIHNHPSPPARRSNSSSRNRSAGATIPQNQNDRTSRLGRAPPTPTPPTPPPSSYTPEEM. A compositionally biased stretch (low complexity) spans 368–380; the sequence is ARRSNSSSRNRSA. Residues 399–411 show a composition bias toward pro residues; sequence PPTPTPPTPPPSS.

This sequence belongs to the WRKY group I family. As to quaternary structure, interacts with IKU1. Expressed in male gametophytes (pollen) and in the endosperm of fertilized ovules.

Its subcellular location is the nucleus. In terms of biological role, transcription factor. Interacts specifically with the W box (5'-(T)TGAC[CT]-3'), a frequently occurring elicitor-responsive cis-acting element. Modulates seed size by negatively regulating the cellularization of syncytial endosperm. The chain is Probable WRKY transcription factor 10 (WRKY10) from Arabidopsis thaliana (Mouse-ear cress).